Consider the following 1699-residue polypeptide: Hybrid signal transduction histidine kinase E (1699 aa).

Disordered regions lie at residues 1-32 (MDKLKINNNLSPPSSPSSSTTTPNLSSTNLEN) and 58-97 (NNIIINNNNNNNNNNNNNNNNNNNNSNNNNNNINNNNPNV). The span at 7–32 (NNNLSPPSSPSSSTTTPNLSSTNLEN) shows a compositional bias: low complexity. Helical transmembrane passes span 142 to 162 (CILLGECGVYVFIYMFFLIFL), 164 to 184 (SFYPIFICGIVSMIVLYIVST), 191 to 211 (LVALIYIFVQSILNFTFFLQI), 238 to 258 (LNFLFIMNLILSLISIQIFFP), 262 to 282 (FSITLTCSLNIFNIIIHLISI), and 295 to 315 (NLIVPITVSFLLSFYSYILSI). The segment covering 412 to 432 (ITNGGNNKQTSTTSANSTPRY) has biased composition (polar residues). 2 disordered regions span residues 412 to 439 (ITNGGNNKQTSTTSANSTPRYNNYNNNN) and 542 to 593 (LLNN…NISN). A compositionally biased stretch (low complexity) spans 544–593 (NNNNNNNNNNNNNNNNNNNNNNNNNNSNNNNNNNSNNNNNNNNINNNISN). The 273-residue stretch at 678–950 (TVSHEVRTPI…AFSFTSILST (273 aa)) folds into the Histidine kinase domain. Position 681 is a phosphohistidine; by autocatalysis (His-681). 5 disordered regions span residues 819–866 (NNNN…NNNN), 1018–1054 (NNNNNNNNNNNNNNNNNNNNNNNNDNNNNNNNNNDNN), 1186–1239 (KKQQ…RKSS), 1252–1294 (MVQV…NPNN), and 1351–1406 (SIPI…SPPP). Over residues 1198–1212 (MGDTLSSTKSPQYTN) the composition is skewed to polar residues. The span at 1219–1239 (SSSSNGSLNKSNRSNLLRKSS) shows a compositional bias: low complexity. Over residues 1271–1282 (KGNNSNPNSTEL) the composition is skewed to polar residues. 2 stretches are compositionally biased toward low complexity: residues 1283-1294 (NSTNSVNGNPNN) and 1355-1392 (NINNNDNNNNNNNNNNNNNNNNNNNNNNNNNNNNNNNN). Residues 1575–1695 (NALIVDDTEL…TLKDTLLKWG (121 aa)) form the Response regulatory domain. A 4-aspartylphosphate modification is found at Asp-1625.

It localises to the membrane. The catalysed reaction is ATP + protein L-histidine = ADP + protein N-phospho-L-histidine.. May act in a signal transduction pathway. This protein undergoes an ATP-dependent autophosphorylation at a conserved histidine residue in the kinase core, and a phosphoryl group is then transferred to a conserved aspartate residue in the receiver domain. The protein is Hybrid signal transduction histidine kinase E (dhkE) of Dictyostelium discoideum (Social amoeba).